Here is a 446-residue protein sequence, read N- to C-terminus: Oxysterols receptor LXR-beta (446 aa).

The tract at residues 1–69 is disordered; it reads MSSPTSSLDT…PERKRKKGPA (69 aa). Residues 1 to 76 are transactivation AF-1; required for ligand-independent transactivation function; sequence MSSPTSSLDT…GPAPKMLGHE (76 aa). Residues 17 to 28 show a composition bias toward low complexity; it reads SPQPSTSATSPT. A DNA-binding region (nuclear receptor) is located at residues 75–152; that stretch reads HELCRVCGDK…AGMREQCVLS (78 aa). 2 consecutive NR C4-type zinc fingers follow at residues 78–98 and 116–140; these read CRVC…CEGC and CRGS…LRKC. The disordered stretch occupies residues 159 to 201; the sequence is KRIQKQQQQQPPPPSEPAASSSGRPAASPGTSEASSQGSGEGE. Residues 175 to 196 are compositionally biased toward low complexity; that stretch reads PAASSSGRPAASPGTSEASSQG. A transactivation AF-2; required for ligand-dependent transactivation function; mediates interaction with CCAR2 region spans residues 205–446; sequence LTAAQELMIQ…LLSEIWDVHE (242 aa). The NR LBD domain occupies 208 to 446; the sequence is AQELMIQQLV…LLSEIWDVHE (239 aa). Residues Lys395 and Lys433 each participate in a glycyl lysine isopeptide (Lys-Gly) (interchain with G-Cter in SUMO2) cross-link.

It belongs to the nuclear hormone receptor family. NR1 subfamily. In terms of assembly, forms a heterodimer with RXR. Interacts with CCAR2 (via N-terminus) in a ligand-independent manner. Interacts (when sumoylated) with GPS2; interaction with GPS2 onto hepatic acute phase protein promoters prevents N-Cor corepressor complex dissociation. Interacts with ABCA12 and ABCA1; this interaction is required for ABCA1 localization to the cell surface and is necessary for its normal activity and stability. In terms of processing, sumoylated by SUMO2 at Lys-395 and Lys-433 during the hepatic acute phase response, leading to promote interaction with GPS2 and prevent N-Cor corepressor complex dissociation. In terms of tissue distribution, ubiquitous.

The protein resides in the nucleus. In terms of biological role, nuclear receptor that exhibits a ligand-dependent transcriptional activation activity. Binds preferentially to double-stranded oligonucleotide direct repeats having the consensus half-site sequence 5'-AGGTCA-3' and 4-nt spacing (DR-4). Regulates cholesterol uptake through MYLIP-dependent ubiquitination of LDLR, VLDLR and LRP8; DLDLR and LRP8. Interplays functionally with RORA for the regulation of genes involved in liver metabolism. Induces LPCAT3-dependent phospholipid remodeling in endoplasmic reticulum (ER) membranes of hepatocytes, driving SREBF1 processing and lipogenesis. Via LPCAT3, triggers the incorporation of arachidonate into phosphatidylcholines of ER membranes, increasing membrane dynamics and enabling triacylglycerols transfer to nascent very low-density lipoprotein (VLDL) particles. Via LPCAT3 also counteracts lipid-induced ER stress response and inflammation, likely by modulating SRC kinase membrane compartmentalization and limiting the synthesis of lipid inflammatory mediators. Plays an anti-inflammatory role during the hepatic acute phase response by acting as a corepressor: inhibits the hepatic acute phase response by preventing dissociation of the N-Cor corepressor complex. The polypeptide is Oxysterols receptor LXR-beta (Nr1h2) (Mus musculus (Mouse)).